The primary structure comprises 815 residues: Ataxin-1 (815 aa).

Basic and acidic residues predominate over residues 1 to 41; the sequence is MKSNQERSNECLPPKKREIPATSRSSEEKAPTLPSDNHRVE. The interval 1-63 is disordered; that stretch reads MKSNQERSNE…GHGGGRHGPA (63 aa). K16 participates in a covalent cross-link: Glycyl lysine isopeptide (Lys-Gly) (interchain with G-Cter in SUMO). Residues 49-61 show a composition bias toward gly residues; the sequence is NPGGRGHGGGRHG. A phosphoserine mark is found at S82 and S88. Disordered stretches follow at residues 185–270, 329–355, and 397–424; these read GSLS…PVHL, EKSR…VPHP, and VQQA…PGHR. K194 participates in a covalent cross-link: Glycyl lysine isopeptide (Lys-Gly) (interchain with G-Cter in SUMO). Residues 197–226 show a composition bias toward low complexity; it reads QQQQQQQQQQQQHQHQQQQQQQQQQQQQQH. Phosphoserine occurs at positions 238 and 253. Polar residues predominate over residues 243–260; that stretch reads QQNQYVHISSSPQNTGRT. A self-association region spans residues 494 to 604; that stretch reads VGSTDMEASG…TEDFIQSAEI (111 aa). The segment at 538-815 is interaction with USP7; the sequence is LVTQAAYPAM…CIEGRSNVGK (278 aa). Residues 540–766 form an RNA-binding region; that stretch reads TQAAYPAMVQ…FLTKIEPSKP (227 aa). The region spanning 562 to 693 is the AXH domain; it reads SPAAAPPTLP…SLTLKNLKNG (132 aa). Glycyl lysine isopeptide (Lys-Gly) (interchain with G-Cter in SUMO) cross-links involve residues K609, K696, and K745. The tract at residues 762-798 is disordered; it reads EPSKPAATRKRRWSAPESRKLEKSEDEPPLTLPKPSL. S775 bears the Phosphoserine mark. A Nuclear localization signal motif is present at residues 794–797; the sequence is PKPS.

Belongs to the ATXN1 family. As to quaternary structure, homooligomer. Interacts with CIC. Interacts with ANP32A, PQBP1, UBQLN4, ATXN1L and USP7. Directly interacts with RBPJ; this interaction is disrupted in the presence of Notch intracellular domain. Competes with ATXN1L for RBPJ-binding. Found in a complex with CIC and ATXN1L. Ubiquitinated by UBE3A, leading to its degradation by the proteasome. The presence of expanded poly-Gln repeats in spinocerebellar ataxia 1 (SCA1) patients impairs ubiquitination and degradation, leading to accumulation of ATXN1 in neurons and subsequent toxicity. In terms of processing, phosphorylation at Ser-775 increases the pathogenicity of proteins with an expanded polyglutamine tract. Post-translationally, sumoylation is dependent on nuclear localization and phosphorylation at Ser-775. It is reduced in the presence of an expanded polyglutamine tract. In terms of tissue distribution, widely expressed throughout the body.

The protein resides in the cytoplasm. The protein localises to the nucleus. Its function is as follows. Chromatin-binding factor that repress Notch signaling in the absence of Notch intracellular domain by acting as a CBF1 corepressor. Binds to the HEY promoter and might assist, along with NCOR2, RBPJ-mediated repression. Binds RNA in vitro. May be involved in RNA metabolism. In concert with CIC and ATXN1L, involved in brain development. The polypeptide is Ataxin-1 (ATXN1) (Homo sapiens (Human)).